The sequence spans 260 residues: MNSAAGFSHLDRRERVLKLGESFEKQPRCAFHTVRYDFKPASIDTSSEGYLEVGEGEQVTITLPNIEGSTPPVTVFKGSKKPYLKECILIINHDTGECRLEKLSSNITVKKTRVEGSSKIQYRKEQQQQQMWNSARTPNLVKHSPSEDKMSPASPIDDIERELKAEASLMDQMSSCDSSSDSKSSSSSSSEDSSSDSEDEDCKSSTSDTGNCVSGHPTMTQYRIPDIDASHNRFRDNSGLLMNTLRNDLQLSESGSDSDD.

The interval 17 to 104 is necessary for interaction with ELL; it reads LKLGESFEKQ…TGECRLEKLS (88 aa). Residues 116–126 are compositionally biased toward basic and acidic residues; that stretch reads GSSKIQYRKEQ. Disordered stretches follow at residues 116-154 and 170-234; these read GSSK…SPAS and MDQM…HNRF. Serine 146, serine 151, and serine 154 each carry phosphoserine. A compositionally biased stretch (low complexity) spans 174-192; sequence SSCDSSSDSKSSSSSSSED. The interval 177–260 is necessary for transactivation activity; it reads DSSSDSKSSS…LSESGSDSDD (84 aa). Over residues 225–234 the composition is skewed to basic and acidic residues; the sequence is PDIDASHNRF. Residues 246–260 form a necessary for interaction with TCEA1 and transactivation activity region; that stretch reads RNDLQLSESGSDSDD.

The protein belongs to the EAF family. Isoform 1 and isoform 2 interact with TCEA1. Component of the super elongation complex (SEC), at least composed of EAF1, EAF2, CDK9, MLLT3/AF9, AFF (AFF1 or AFF4), the P-TEFb complex and ELL (ELL, ELL2 or ELL3). Interacts with ELL and ELL2. In terms of tissue distribution, expressed in heart, brain, placenta, lung, skeletal muscle, kidney, pancreas, spleen, prostate, testis, small intestine, colon, adrenal, bone marrow, lymph node, spinal gland, stomach, thyroid, trachea, thymus, liver and leukocytes.

The protein localises to the nucleus speckle. Functionally, acts as a transcriptional transactivator of TCEA1 elongation activity. Acts as a transcriptional transactivator of ELL and ELL2 elongation activities. Potent inducer of apoptosis in prostatic and non-prostatic cell lines. Inhibits prostate tumor growth in vivo. The protein is ELL-associated factor 2 (EAF2) of Homo sapiens (Human).